A 288-amino-acid polypeptide reads, in one-letter code: Acetyl-coenzyme A carboxylase carboxyl transferase subunit beta (288 aa).

The CoA carboxyltransferase N-terminal domain occupies 34-288 (LFAKCPACKH…HLVAFHGGGQ (255 aa)). 4 residues coordinate Zn(2+): C38, C41, C56, and C59. Residues 38 to 59 (CPACKHMIYKKDLGLAKICPTC) form a C4-type zinc finger.

The protein belongs to the AccD/PCCB family. As to quaternary structure, acetyl-CoA carboxylase is a heterohexamer composed of biotin carboxyl carrier protein (AccB), biotin carboxylase (AccC) and two subunits each of ACCase subunit alpha (AccA) and ACCase subunit beta (AccD). Requires Zn(2+) as cofactor.

It is found in the cytoplasm. The enzyme catalyses N(6)-carboxybiotinyl-L-lysyl-[protein] + acetyl-CoA = N(6)-biotinyl-L-lysyl-[protein] + malonyl-CoA. It functions in the pathway lipid metabolism; malonyl-CoA biosynthesis; malonyl-CoA from acetyl-CoA: step 1/1. Functionally, component of the acetyl coenzyme A carboxylase (ACC) complex. Biotin carboxylase (BC) catalyzes the carboxylation of biotin on its carrier protein (BCCP) and then the CO(2) group is transferred by the transcarboxylase to acetyl-CoA to form malonyl-CoA. The chain is Acetyl-coenzyme A carboxylase carboxyl transferase subunit beta from Streptococcus pyogenes serotype M28 (strain MGAS6180).